A 673-amino-acid chain; its full sequence is Methionine--tRNA ligase (673 aa).

Positions 14-24 match the 'HIGH' region motif; it reads YYPSGKLHIGN. The short motif at 310–314 is the 'KMSKS' region element; that stretch reads KMSKS. K313 is an ATP binding site. One can recognise a tRNA-binding domain in the interval 571–673; that stretch reads VFDKVELKVA…SEAPNGSSIS (103 aa).

The protein belongs to the class-I aminoacyl-tRNA synthetase family. MetG type 2B subfamily. Homodimer.

It localises to the cytoplasm. The catalysed reaction is tRNA(Met) + L-methionine + ATP = L-methionyl-tRNA(Met) + AMP + diphosphate. Is required not only for elongation of protein synthesis but also for the initiation of all mRNA translation through initiator tRNA(fMet) aminoacylation. This chain is Methionine--tRNA ligase (metG), found in Oceanobacillus iheyensis (strain DSM 14371 / CIP 107618 / JCM 11309 / KCTC 3954 / HTE831).